Here is a 225-residue protein sequence, read N- to C-terminus: 3-demethoxyubiquinol 3-hydroxylase (225 aa).

A compositionally biased stretch (polar residues) spans 1–11; the sequence is MSVASTSSGFT. The segment at 1–20 is disordered; sequence MSVASTSSGFTPFSRRRGPL. The Fe cation site is built by E74, E104, H107, E156, E188, and H191. The interval 181–203 is disordered; it reads VSQMKDDEAQHRASAERAGGVPL. Positions 184–195 are enriched in basic and acidic residues; it reads MKDDEAQHRASA.

Belongs to the COQ7 family. Fe cation serves as cofactor.

It is found in the cell membrane. The enzyme catalyses a 5-methoxy-2-methyl-3-(all-trans-polyprenyl)benzene-1,4-diol + AH2 + O2 = a 3-demethylubiquinol + A + H2O. It participates in cofactor biosynthesis; ubiquinone biosynthesis. Functionally, catalyzes the hydroxylation of 2-nonaprenyl-3-methyl-6-methoxy-1,4-benzoquinol during ubiquinone biosynthesis. This Bordetella petrii (strain ATCC BAA-461 / DSM 12804 / CCUG 43448) protein is 3-demethoxyubiquinol 3-hydroxylase.